A 141-amino-acid chain; its full sequence is Acetyltransferase YpeA (141 aa).

Positions Met-1–Tyr-141 constitute an N-acetyltransferase domain.

The protein belongs to the acetyltransferase family. YpeA subfamily.

The polypeptide is Acetyltransferase YpeA (Escherichia coli O157:H7).